A 127-amino-acid polypeptide reads, in one-letter code: uncharacterized protein (127 aa).

Transmembrane regions (helical) follow at residues 1-21 (MYII…YILV), 32-52 (TVAA…LYVF), 68-88 (AFFS…IILV), and 100-120 (ILDN…LVFK).

The protein belongs to the GtrA family.

Its subcellular location is the cell membrane. This is an uncharacterized protein from Bacillus subtilis (strain 168).